The chain runs to 338 residues: GTPase Obg (338 aa).

Residues 1-159 (MQFIDQAEIE…RRIRLELKLL (159 aa)) enclose the Obg domain. Residues 160-328 (AEVGIIGLPN…MLQATWEQLD (169 aa)) enclose the OBG-type G domain. GTP-binding positions include 166–173 (GLPNAGKS), 191–195 (FTTLI), 213–216 (DIPG), 280–283 (NKLD), and 309–311 (SAV). Mg(2+)-binding residues include serine 173 and threonine 193.

This sequence belongs to the TRAFAC class OBG-HflX-like GTPase superfamily. OBG GTPase family. In terms of assembly, monomer. Mg(2+) is required as a cofactor.

It localises to the cytoplasm. In terms of biological role, an essential GTPase which binds GTP, GDP and possibly (p)ppGpp with moderate affinity, with high nucleotide exchange rates and a fairly low GTP hydrolysis rate. Plays a role in control of the cell cycle, stress response, ribosome biogenesis and in those bacteria that undergo differentiation, in morphogenesis control. The polypeptide is GTPase Obg (Gloeothece citriformis (strain PCC 7424) (Cyanothece sp. (strain PCC 7424))).